We begin with the raw amino-acid sequence, 910 residues long: Schlafen family member 8 (910 aa).

A n'-domain region region spans residues 1–354 (METHPSLAVK…WVRMMVDFGP (354 aa)). Catalysis depends on residues Glu205 and Glu210. 3 residues coordinate Zn(2+): His280, Cys282, and Cys319. An ATP-binding site is contributed by 599-606 (GLPGSGKT).

The protein belongs to the Schlafen family. Subgroup III subfamily. Mg(2+) is required as a cofactor. As to expression, in T-cells, expressed at relatively constant levels during development: expressed in immature CD3(-)CD4(-)CD8(-) T-cells (DN stage), in CD4(+)CD8(+) double-positive stage (DP) and mature CD4(+) or CD8(+) thymocytes. Expression is slightly reduced at the DP stage.

It is found in the cytoplasm. Functionally, endoribonuclease that cleaves tRNAs and rRNAs. Cleaves tRNAs 11 nucleotides from the 3'-terminus at the acceptor stem. May be involved in immune system via regulation of inflammation. The sequence is that of Schlafen family member 8 from Mus musculus (Mouse).